Consider the following 1495-residue polypeptide: Chromosome partition protein MukB (1495 aa).

An ATP-binding site is contributed by 60–67; sequence GGNGAGKS. Coiled-coil stretches lie at residues 322 to 693, 861 to 1140, and 1233 to 1289; these read RART…SQPD, EDVM…AKVS, and IDAI…LQNI. The flexible hinge stretch occupies residues 692 to 809; sequence PDGSEDARLN…EIPLFGRAAR (118 aa).

It belongs to the SMC family. MukB subfamily. As to quaternary structure, homodimerization via its hinge domain. Binds to DNA via its C-terminal region. Interacts, and probably forms a ternary complex, with MukE and MukF via its C-terminal region. The complex formation is stimulated by calcium or magnesium. Interacts with tubulin-related protein FtsZ.

Its subcellular location is the cytoplasm. The protein localises to the nucleoid. In terms of biological role, plays a central role in chromosome condensation, segregation and cell cycle progression. Functions as a homodimer, which is essential for chromosome partition. Involved in negative DNA supercoiling in vivo, and by this means organize and compact chromosomes. May achieve or facilitate chromosome segregation by condensation DNA from both sides of a centrally located replisome during cell division. This Pasteurella multocida (strain Pm70) protein is Chromosome partition protein MukB.